The sequence spans 338 residues: MQKFQIKVPASSANIGPGFDVLGMSLEEYMTLDVEVSTESGPCVLTYEGDGKEHVSLDVQKNMITQTSLYVLRCNNISTFPYATKIHVINPIPLGRGMGSSGSAAIAGVMLANEIAKLGLSKLQMMDYVLMIERHPDNVMASMMGGFVGSFLRELSEEEKNAFSPSADDLLKNEALTLPPKSLGTFARLPWASELKAIVVIPEFHLATSKARSVLPTSYGRTDVVYNLQRLALLTTALGQTPINPHLVYEVMKDKVHQPYRASLIPGLQNILATLNPDTQPGLCGICLSGAGPTVLALATGNFDEIAHAMLSIFEKHGVKCRYLVLSPAFDGATVKYF.

It belongs to the GHMP kinase family. Homoserine kinase subfamily.

It catalyses the reaction L-homoserine + ATP = O-phospho-L-homoserine + ADP + H(+). The protein operates within amino-acid biosynthesis; L-threonine biosynthesis; L-threonine from L-aspartate: step 4/5. Commits homoserine to the threonine biosynthesis pathway by catalyzing its O-phosphorylation. This is Homoserine kinase from Schizosaccharomyces pombe (strain 972 / ATCC 24843) (Fission yeast).